Here is a 234-residue protein sequence, read N- to C-terminus: Lactate utilization protein C 1 (234 aa).

Belongs to the LutC/YkgG family.

Functionally, is involved in L-lactate degradation and allows cells to grow with lactate as the sole carbon source. The protein is Lactate utilization protein C 1 of Bacillus mycoides (strain KBAB4) (Bacillus weihenstephanensis).